The sequence spans 2462 residues: Piezo-type mechanosensitive ion channel homolog (2462 aa).

Helical transmembrane passes span 5-25 (LVGFLLPSLLLAAALINWSVI), 27-47 (FLDLIAFLLVHYIAPEIGYRF), 57-77 (IFIFSFAVFLAQVVYLVIWAA), 105-125 (TVMYFLALQLLTSLVALADIY), 163-183 (AVQLAVGICNPSWVSLPFFIG), 207-227 (LYIYAGFNIVLLYLYQLPINF), 248-268 (EGPDICSGLFLVLFYIMLSYV), 325-345 (FFTYGFPVSLFALSFWSFHFA), 347-367 (LCAFGLLAYVGYIIYAFPSLF), 374-394 (GLLLVFILLWAVSTYIFNVAF), 404-424 (FGLGMLVALGNLVNNSVFLYL), 467-487 (LIFLIAMKPGFFHAVYVIFFL), 502-522 (SLILLCEVHFALLYILEIDLV), 554-574 (IALLACFCAIHNHGFEVLFSF), 653-673 (VYLVKPNYVSFGYIFLLLLWI), 694-714 (AVLVFMFIYCLSSFVSLQLWL), 730-750 (APLLDNVWESLAVLIVMQLYS), 792-812 (FYASLSPISVFGFVYLLGLVI), and 826-846 (SFLIYTGFLVSAEYLFQLWGM). Residues 927 to 947 (ASVSSSNGENPSSTDHASISM) form a disordered region. Positions 928–939 (SVSSSNGENPSS) are enriched in low complexity. The next 8 membrane-spanning stretches (helical) occupy residues 1027 to 1047 (FWIENMFNLYGLEINMIALLL), 1050 to 1070 (FALLNAISMVYIALLAACVLL), 1078 to 1098 (LWPVVVFLFASILAIEYVATW), 1143 to 1160 (TLISYFVVFMLACFKLRA), 1204 to 1224 (LYCYVHLLDVVLILILITGTL), 1228 to 1248 (ILHLGYLAFALVFARMRLEIL), 1260 to 1280 (VYNFVLIIFSLAYQSPFVGNF), and 1310 to 1330 (SALVEIIIFMLVSLQSYMFSS). Positions 1347–1400 (AIVREQEKKAARKTEQLQQIREAEEKKRQRNLQVEKMKSEMLNLRVQLHRMNSD) form a coiled coil. Positions 1543–1583 (SDTNEQSSVDDEVYDEMESQKRKHTPFERSTSLQSDRSSDG) are disordered. Over residues 1550–1559 (SVDDEVYDEM) the composition is skewed to acidic residues. A compositionally biased stretch (polar residues) spans 1570 to 1583 (ERSTSLQSDRSSDG). The next 8 membrane-spanning stretches (helical) occupy residues 1611–1631 (FIIAFLWNFSLLSMVYLAALF), 1647–1667 (VIMLMYTEIYILLQYLYQIII), 1916–1936 (YIFGADLIVFFLVAIFYQSVI), 1956–1976 (FVIILMVIFFLIVVDRVIYLC), 1984–2004 (VYYLFSLILFTYAVTEYAWSI), 2012–2032 (AGLALRIIFLAKAMSLALQAI), 2130–2150 (GICLFFILLCVIWAPMLMYSS), and 2369–2389 (FLGDTLSKFSIWGLYITFVLA).

The protein belongs to the PIEZO (TC 1.A.75) family.

It localises to the membrane. Its function is as follows. Pore-forming subunit of a mechanosensitive non-specific cation channel, that conducts both sodium and potassium ions. In Arabidopsis thaliana (Mouse-ear cress), this protein is Piezo-type mechanosensitive ion channel homolog.